A 151-amino-acid chain; its full sequence is 3-hydroxyacyl-[acyl-carrier-protein] dehydratase FabZ (151 aa).

Histidine 53 is an active-site residue.

It belongs to the thioester dehydratase family. FabZ subfamily.

Its subcellular location is the cytoplasm. The catalysed reaction is a (3R)-hydroxyacyl-[ACP] = a (2E)-enoyl-[ACP] + H2O. Its function is as follows. Involved in unsaturated fatty acids biosynthesis. Catalyzes the dehydration of short chain beta-hydroxyacyl-ACPs and long chain saturated and unsaturated beta-hydroxyacyl-ACPs. In Erythrobacter litoralis (strain HTCC2594), this protein is 3-hydroxyacyl-[acyl-carrier-protein] dehydratase FabZ.